A 631-amino-acid polypeptide reads, in one-letter code: uncharacterized protein (631 aa).

Positions M1 to E19 are enriched in polar residues. Residues M1–T92 form a disordered region. The span at K67 to K76 shows a compositional bias: basic residues. Residues L277–L426 enclose the Exonuclease domain. Over residues A517–N526 the composition is skewed to polar residues. Residues A517 to Q540 are disordered. Positions S527 to Q540 are enriched in acidic residues.

The protein belongs to the REXO1/REXO3 family.

It localises to the nucleus. This is an uncharacterized protein from Schizosaccharomyces pombe (strain 972 / ATCC 24843) (Fission yeast).